Consider the following 109-residue polypeptide: Putative ankyrin repeat protein L482 (109 aa).

4 ANK repeats span residues 1 to 26, 27 to 56, 57 to 86, and 88 to 109; these read YLTE…NITT, NNNY…NIRS, ENNL…DIRS, and NNYA…YLVA.

The sequence is that of Putative ankyrin repeat protein L482 from Acanthamoeba polyphaga (Amoeba).